Reading from the N-terminus, the 151-residue chain is Aspartate carbamoyltransferase regulatory chain (151 aa).

Residues C107, C112, C135, and C138 each contribute to the Zn(2+) site.

This sequence belongs to the PyrI family. As to quaternary structure, contains catalytic and regulatory chains. It depends on Zn(2+) as a cofactor.

Functionally, involved in allosteric regulation of aspartate carbamoyltransferase. The chain is Aspartate carbamoyltransferase regulatory chain from Thermococcus onnurineus (strain NA1).